Consider the following 263-residue polypeptide: 3-deoxy-manno-octulosonate cytidylyltransferase (263 aa).

Belongs to the KdsB family.

It is found in the cytoplasm. The enzyme catalyses 3-deoxy-alpha-D-manno-oct-2-ulosonate + CTP = CMP-3-deoxy-beta-D-manno-octulosonate + diphosphate. It participates in nucleotide-sugar biosynthesis; CMP-3-deoxy-D-manno-octulosonate biosynthesis; CMP-3-deoxy-D-manno-octulosonate from 3-deoxy-D-manno-octulosonate and CTP: step 1/1. Its pathway is bacterial outer membrane biogenesis; lipopolysaccharide biosynthesis. Its function is as follows. Activates KDO (a required 8-carbon sugar) for incorporation into bacterial lipopolysaccharide in Gram-negative bacteria. The chain is 3-deoxy-manno-octulosonate cytidylyltransferase from Burkholderia cenocepacia (strain ATCC BAA-245 / DSM 16553 / LMG 16656 / NCTC 13227 / J2315 / CF5610) (Burkholderia cepacia (strain J2315)).